The primary structure comprises 135 residues: uncharacterized protein (135 aa).

This is an uncharacterized protein from Fowl adenovirus A serotype 1 (strain CELO / Phelps) (FAdV-1).